We begin with the raw amino-acid sequence, 487 residues long: Glutamyl-tRNA(Gln) amidotransferase subunit A (487 aa).

Residues lysine 80 and serine 155 each act as charge relay system in the active site. Serine 179 functions as the Acyl-ester intermediate in the catalytic mechanism.

This sequence belongs to the amidase family. GatA subfamily. As to quaternary structure, heterotrimer of A, B and C subunits.

It catalyses the reaction L-glutamyl-tRNA(Gln) + L-glutamine + ATP + H2O = L-glutaminyl-tRNA(Gln) + L-glutamate + ADP + phosphate + H(+). Its function is as follows. Allows the formation of correctly charged Gln-tRNA(Gln) through the transamidation of misacylated Glu-tRNA(Gln) in organisms which lack glutaminyl-tRNA synthetase. The reaction takes place in the presence of glutamine and ATP through an activated gamma-phospho-Glu-tRNA(Gln). The chain is Glutamyl-tRNA(Gln) amidotransferase subunit A from Chloroflexus aurantiacus (strain ATCC 29366 / DSM 635 / J-10-fl).